We begin with the raw amino-acid sequence, 433 residues long: D-amino acid dehydrogenase (433 aa).

3 to 17 (VLVLGSGVIGTTSAY) lines the FAD pocket.

Belongs to the DadA oxidoreductase family. FAD serves as cofactor.

It catalyses the reaction a D-alpha-amino acid + A + H2O = a 2-oxocarboxylate + AH2 + NH4(+). Functionally, oxidative deamination of D-amino acids. The polypeptide is D-amino acid dehydrogenase (Pseudomonas syringae pv. tomato (strain ATCC BAA-871 / DC3000)).